The following is a 92-amino-acid chain: Small ribosomal subunit protein uS19 (92 aa).

It belongs to the universal ribosomal protein uS19 family.

Protein S19 forms a complex with S13 that binds strongly to the 16S ribosomal RNA. In Novosphingobium aromaticivorans (strain ATCC 700278 / DSM 12444 / CCUG 56034 / CIP 105152 / NBRC 16084 / F199), this protein is Small ribosomal subunit protein uS19.